Here is a 358-residue protein sequence, read N- to C-terminus: Glutamate 5-kinase (358 aa).

Lys9 is a binding site for ATP. The substrate site is built by Ser49, Asp136, and Asn148. Residues Thr168 to Asp169 and Thr210 to Lys216 contribute to the ATP site. The PUA domain occupies Asp275 to Asn353.

The protein belongs to the glutamate 5-kinase family.

It localises to the cytoplasm. It carries out the reaction L-glutamate + ATP = L-glutamyl 5-phosphate + ADP. The protein operates within amino-acid biosynthesis; L-proline biosynthesis; L-glutamate 5-semialdehyde from L-glutamate: step 1/2. Its function is as follows. Catalyzes the transfer of a phosphate group to glutamate to form L-glutamate 5-phosphate. The protein is Glutamate 5-kinase of Streptococcus suis (strain 05ZYH33).